A 657-amino-acid polypeptide reads, in one-letter code: Penicillin-binding protein activator LpoA (657 aa).

The signal sequence occupies residues 1-25 (MLSSTFVRSKAGLVPVILAALILAA). The N-palmitoyl cysteine moiety is linked to residue Cys26. Cys26 carries S-diacylglycerol cysteine lipidation.

It belongs to the LpoA family. Interacts with PBP1a.

It is found in the cell outer membrane. Functionally, regulator of peptidoglycan synthesis that is essential for the function of penicillin-binding protein 1A (PBP1a). This is Penicillin-binding protein activator LpoA from Yersinia pestis bv. Antiqua (strain Angola).